The following is a 181-amino-acid chain: Ribosome maturation factor RimP (181 aa).

This sequence belongs to the RimP family.

Its subcellular location is the cytoplasm. Functionally, required for maturation of 30S ribosomal subunits. The polypeptide is Ribosome maturation factor RimP (Sphingopyxis alaskensis (strain DSM 13593 / LMG 18877 / RB2256) (Sphingomonas alaskensis)).